The sequence spans 789 residues: uncharacterized protein (789 aa).

5 disordered regions span residues 107–326, 426–491, 523–625, 666–751, and 765–789; these read YQQD…NNNN, MLKS…NNNN, SVNF…ISNN, THTF…KGNN, and PTRF…YNQH. Residues 113–123 show a composition bias toward acidic residues; it reads NNTDDEQEQEQ. Low complexity-rich tracts occupy residues 124-141, 151-194, 201-213, and 225-270; these read EQQQ…TPIK, TSQT…ITPI, SIST…LRSS, and TSST…THNS. The segment covering 274–290 has biased composition (acidic residues); that stretch reads IDDDDGDNNDEINDEND. Low complexity-rich tracts occupy residues 291–326 and 429–491; these read INSN…NNNN and SNNS…NNNN. Polar residues predominate over residues 523 to 549; it reads SVNFDRNQNQKSPFLNNTSMPNINFNE. Low complexity-rich tracts occupy residues 550 to 581, 602 to 617, 696 to 722, and 766 to 789; these read QSQQ…SINY, TSGS…NNSK, HIMN…SGSN, and TRFN…YNQH.

This is an uncharacterized protein from Dictyostelium discoideum (Social amoeba).